Here is a 227-residue protein sequence, read N- to C-terminus: NAD(P)H-quinone oxidoreductase subunit K, chloroplastic (227 aa).

Residues C43, C44, C108, and C139 each coordinate [4Fe-4S] cluster. Polar residues predominate over residues R173–Y192. The segment at R173 to P201 is disordered.

Belongs to the complex I 20 kDa subunit family. In terms of assembly, NDH is composed of at least 16 different subunits, 5 of which are encoded in the nucleus. [4Fe-4S] cluster serves as cofactor.

Its subcellular location is the plastid. The protein localises to the chloroplast thylakoid membrane. The enzyme catalyses a plastoquinone + NADH + (n+1) H(+)(in) = a plastoquinol + NAD(+) + n H(+)(out). It catalyses the reaction a plastoquinone + NADPH + (n+1) H(+)(in) = a plastoquinol + NADP(+) + n H(+)(out). In terms of biological role, NDH shuttles electrons from NAD(P)H:plastoquinone, via FMN and iron-sulfur (Fe-S) centers, to quinones in the photosynthetic chain and possibly in a chloroplast respiratory chain. The immediate electron acceptor for the enzyme in this species is believed to be plastoquinone. Couples the redox reaction to proton translocation, and thus conserves the redox energy in a proton gradient. The protein is NAD(P)H-quinone oxidoreductase subunit K, chloroplastic of Trachelium caeruleum (Blue throatwort).